The chain runs to 163 residues: 3-isopropylmalate dehydratase small subunit (163 aa).

This sequence belongs to the LeuD family. LeuD type 2 subfamily. In terms of assembly, heterodimer of LeuC and LeuD.

It catalyses the reaction (2R,3S)-3-isopropylmalate = (2S)-2-isopropylmalate. It participates in amino-acid biosynthesis; L-leucine biosynthesis; L-leucine from 3-methyl-2-oxobutanoate: step 2/4. Its function is as follows. Catalyzes the isomerization between 2-isopropylmalate and 3-isopropylmalate, via the formation of 2-isopropylmaleate. The protein is 3-isopropylmalate dehydratase small subunit of Brachyspira hyodysenteriae (strain ATCC 49526 / WA1).